Reading from the N-terminus, the 298-residue chain is Acetylglutamate kinase (298 aa).

Substrate-binding positions include 69–70 (GG), Arg-91, and Asn-196.

Belongs to the acetylglutamate kinase family. ArgB subfamily.

Its subcellular location is the cytoplasm. It catalyses the reaction N-acetyl-L-glutamate + ATP = N-acetyl-L-glutamyl 5-phosphate + ADP. It participates in amino-acid biosynthesis; L-arginine biosynthesis; N(2)-acetyl-L-ornithine from L-glutamate: step 2/4. Its function is as follows. Catalyzes the ATP-dependent phosphorylation of N-acetyl-L-glutamate. In Rhodopseudomonas palustris (strain ATCC BAA-98 / CGA009), this protein is Acetylglutamate kinase.